Reading from the N-terminus, the 549-residue chain is MTLTSIRRGYHVIKTLLQYGLDEVLPPKMTPWYFTLARSSLFWIRNKHKSKPGGERLKLAMQELGPVYIKLGQMLSTRRDLLSDEWAIELAMLQDKVPPFDGVLARKAIEAELKASIESLFDDFDETPLASASISQVHTATLKSNGKAVVLKVLRPNVEAKILADLQLMSQTANLLEYFLGEGNRLRPAEVIEDYRVTILGELNLKLEALNAIKLRNNFLNSDALYVPYVYEEFCYPRLMVMERIYGIPVSDIAALKAQGTNFKLLAERGVELFFTQVFRDNFFHADMHPGNIFISRDHPENPYYIGLDCGIMGTLSEVDKRYLAENFLAFFNRDYHRIAQLYIESGWVSEKTDLQAFEQAIKVVCEPMFNKPLDEISFGHVLLELFRTARSFDIVVQPQLVLLEKTLLYIEGLGRQLYPQLDLWQTAKPFLEQWMAEQVGPKAMFKKVSTKLPYWSDKLPEFPELIYDNLKLGRKLLSSQQQMLDKYLKHQQQAHKSNYMLITSAVLLICGTLLFNQDATLWSPYVCLTSGVLMWFIGWRSRPKNRKF.

Positions 123–501 (DFDETPLASA…QQQAHKSNYM (379 aa)) constitute a Protein kinase domain. Residues 129 to 137 (LASASISQV) and K152 each bind ATP. D287 (proton acceptor) is an active-site residue. The next 2 membrane-spanning stretches (helical) occupy residues 499–516 (NYMLITSAVLLICGTLLF) and 521–540 (TLWSPYVCLTSGVLMWFIGW).

It belongs to the ABC1 family. UbiB subfamily.

It is found in the cell inner membrane. The protein operates within cofactor biosynthesis; ubiquinone biosynthesis [regulation]. Is probably a protein kinase regulator of UbiI activity which is involved in aerobic coenzyme Q (ubiquinone) biosynthesis. This chain is Probable protein kinase UbiB, found in Shewanella sp. (strain W3-18-1).